A 208-amino-acid chain; its full sequence is N-(5'-phosphoribosyl)anthranilate isomerase (208 aa).

Belongs to the TrpF family.

The catalysed reaction is N-(5-phospho-beta-D-ribosyl)anthranilate = 1-(2-carboxyphenylamino)-1-deoxy-D-ribulose 5-phosphate. Its pathway is amino-acid biosynthesis; L-tryptophan biosynthesis; L-tryptophan from chorismate: step 3/5. The chain is N-(5'-phosphoribosyl)anthranilate isomerase from Nitrosospira multiformis (strain ATCC 25196 / NCIMB 11849 / C 71).